Here is a 421-residue protein sequence, read N- to C-terminus: Thymidine phosphorylase (421 aa).

This sequence belongs to the thymidine/pyrimidine-nucleoside phosphorylase family. In terms of assembly, homodimer.

It catalyses the reaction thymidine + phosphate = 2-deoxy-alpha-D-ribose 1-phosphate + thymine. Its function is as follows. The enzymes which catalyze the reversible phosphorolysis of pyrimidine nucleosides are involved in the degradation of these compounds and in their utilization as carbon and energy sources, or in the rescue of pyrimidine bases for nucleotide synthesis. The sequence is that of Thymidine phosphorylase (deoA) from Mycoplasma pneumoniae (strain ATCC 29342 / M129 / Subtype 1) (Mycoplasmoides pneumoniae).